We begin with the raw amino-acid sequence, 358 residues long: Tribbles homolog 3 (358 aa).

The segment at Met1 to Thr54 is disordered. An interaction with DDIT3/CHOP region spans residues Met1–Leu127. The residue at position 12 (Ser12) is a Phosphoserine. Over residues Pro41–Thr54 the composition is skewed to pro residues. Residues Leu68–Arg316 enclose the Protein kinase domain.

It belongs to the protein kinase superfamily. CAMK Ser/Thr protein kinase family. Tribbles subfamily. As to quaternary structure, interacts with AKT1, AKT2, MAP2K1 and MAP2K7. Interacts with ATF4. Interacts with DDIT3/CHOP and inhibits its interaction with EP300/P300. Interacts with APOBEC3C. Interacts (via N-terminus) with APOBEC3A. Interacts with RELA. In terms of tissue distribution, highest expression in liver, pancreas, peripheral blood leukocytes and bone marrow. Also highly expressed in a number of primary lung, colon and breast tumors. Expressed in spleen, thymus, and prostate and is undetectable in other examined tissues, including testis, ovary, small intestine, colon, leukocyte, heart, brain, placenta, lung, skeletal muscle, and kidney.

It is found in the nucleus. Its function is as follows. Inactive protein kinase which acts as a regulator of the integrated stress response (ISR), a process for adaptation to various stress. Inhibits the transcriptional activity of DDIT3/CHOP and is involved in DDIT3/CHOP-dependent cell death during ER stress. May play a role in programmed neuronal cell death but does not appear to affect non-neuronal cells. Acts as a negative feedback regulator of the ATF4-dependent transcription during the ISR: while TRIB3 expression is promoted by ATF4, TRIB3 protein interacts with ATF4 and inhibits ATF4 transcription activity. Disrupts insulin signaling by binding directly to Akt kinases and blocking their activation. May bind directly to and mask the 'Thr-308' phosphorylation site in AKT1. Interacts with the NF-kappa-B transactivator p65 RELA and inhibits its phosphorylation and thus its transcriptional activation activity. Interacts with MAPK kinases and regulates activation of MAP kinases. Can inhibit APOBEC3A editing of nuclear DNA. The sequence is that of Tribbles homolog 3 (TRIB3) from Homo sapiens (Human).